We begin with the raw amino-acid sequence, 152 residues long: Large ribosomal subunit protein uL22 (152 aa).

A compositionally biased stretch (low complexity) spans 124–145 (APKKAAAKKAAPAKETTPAATE). Positions 124–152 (APKKAAAKKAAPAKETTPAATESKTEGAE) are disordered.

The protein belongs to the universal ribosomal protein uL22 family. In terms of assembly, part of the 50S ribosomal subunit.

In terms of biological role, this protein binds specifically to 23S rRNA; its binding is stimulated by other ribosomal proteins, e.g. L4, L17, and L20. It is important during the early stages of 50S assembly. It makes multiple contacts with different domains of the 23S rRNA in the assembled 50S subunit and ribosome. Functionally, the globular domain of the protein is located near the polypeptide exit tunnel on the outside of the subunit, while an extended beta-hairpin is found that lines the wall of the exit tunnel in the center of the 70S ribosome. The protein is Large ribosomal subunit protein uL22 of Salinispora tropica (strain ATCC BAA-916 / DSM 44818 / JCM 13857 / NBRC 105044 / CNB-440).